The following is a 240-amino-acid chain: UDP-2,3-diacylglucosamine hydrolase (240 aa).

The Mn(2+) site is built by Asp-8, His-10, Asp-41, Asn-78, and His-113. Substrate is bound at residue 78-79; it reads NR. Substrate-binding residues include Asp-121, Ser-159, Asn-163, Lys-166, and His-194. Positions 194 and 196 each coordinate Mn(2+).

The protein belongs to the LpxH family. It depends on Mn(2+) as a cofactor.

The protein localises to the cell inner membrane. The enzyme catalyses UDP-2-N,3-O-bis[(3R)-3-hydroxytetradecanoyl]-alpha-D-glucosamine + H2O = 2-N,3-O-bis[(3R)-3-hydroxytetradecanoyl]-alpha-D-glucosaminyl 1-phosphate + UMP + 2 H(+). It participates in glycolipid biosynthesis; lipid IV(A) biosynthesis; lipid IV(A) from (3R)-3-hydroxytetradecanoyl-[acyl-carrier-protein] and UDP-N-acetyl-alpha-D-glucosamine: step 4/6. Hydrolyzes the pyrophosphate bond of UDP-2,3-diacylglucosamine to yield 2,3-diacylglucosamine 1-phosphate (lipid X) and UMP by catalyzing the attack of water at the alpha-P atom. Involved in the biosynthesis of lipid A, a phosphorylated glycolipid that anchors the lipopolysaccharide to the outer membrane of the cell. The protein is UDP-2,3-diacylglucosamine hydrolase of Shewanella baltica (strain OS195).